The following is a 923-amino-acid chain: MAPKPPKSPKGQKKGKKNMKQQLLVPEEEEPMNMESMGHPEIYPLVLTTKTQEIFNCRVDEDMTDEQTYKLIKKEDILADLQNRAAVSDFHPVKKIVREYPGEELLLVYDKDFKYGLNFYLIGTEDGKENFLKPPEVPEEQEEPKEHVQEDVYVYNPPVSKPWVSLGSEKEIEEESVQESGKRVTYMISRKRSEFGAPVTFSDQNASSVKDAYIECTSYPEKNYTLSQVEKDVGLQVIAEVKDTSTQTKWAFPKNATTQYYPREFSEEEKSLIGKSKSLVDFFNNVSTSVEVALQQNEIMNTFIDDWKNLAEEESTFGDKTDTHLKEYQSFTDLHNTMEKMITCVSWHPTIFGLIVVSVAVRLSYEERVQNSGRLLLQPSLLLFWSFSDPIHPQLMLESPDDIFCFEFCPSDPNIIAGGCINGQIVLWDITAHADRIENIKTGGHRSKKTSLKPMFLLEPDSNKESMYIRHCAVSSIENGHRKVITDIHWLPDSFEINRMGSVFENRSGINCQLVTCSADCTICFWDIRPQKPAVTAAAAASAATTATNNANSQQSPVEKKKEENIDIPFDVPSTFLHLDLSWKPLSRLKLSKGDTSLDHCPTKLSLGEDPFLCKIQGTSSIHIILRDKMLSQIKMVKTSEINPYQNLEAGIANILKPIEDFCTKFFVGTEEGEVIYTDWKMERDSDTGRLMAKKPVSLYTVHDGAVHTIQRSPFFNDIVLTVGGWNVAIWKEEVMTGPLLQTCCGPKRYTAGHWSLTRPGVFYIGREDGNVDIWDLLEKTHEPAQSQNICITMITYIKPWTFSSKQQFIAVADYYGTLHILEIPWTLSHPSLNEVSSVNYYFEREVRHLEYVQQRKEIREQEKIDMALELVKKKAKIYQKTKEQMEAELKLEYESYLDLEKSVLFALGLSKVSEKKSYLDSH.

Residues 1–35 are disordered; it reads MAPKPPKSPKGQKKGKKNMKQQLLVPEEEEPMNME. Residues 10–19 show a composition bias toward basic residues; sequence KGQKKGKKNM. 4 WD repeats span residues 398–438, 480–536, 702–741, and 745–785; these read ESPD…DRIE, GHRK…PAVT, VHDG…GPLL, and CGPK…HEPA. Positions 869 to 889 form a coiled coil; the sequence is LELVKKKAKIYQKTKEQMEAE.

Interacts with ACTR2; this interaction reduces binding of the Arp2/3 complex to the VCA domain of nucleation promoting factors. Part of the multisubunit axonemal dynein complex formed at least of two heavy chains and a number of intermediate and light chains. Found in a associated with the catalytic heavy chain DNAH2, the intermediate chain DNAI4, and the light chain DYNLT1. As to expression, strongly expressed in the testes. Detected also in brain and lung tissues.

It localises to the cytoplasm. Its function is as follows. Acts as a negative regulator of cell migration, invasion, and metastasis downstream of p53/TP53, through inhibition of Arp2/3 complex-mediated actin polymerization. Via its association with the multisubunit axonemal dynein complex, is potentially involved in the regulation of cilia function. May play a role in osteogenesis of dental tissue-derived mesenchymal stem cells. In Mus musculus (Mouse), this protein is Dynein axonemal intermediate chain 3 (Dnai3).